Reading from the N-terminus, the 368-residue chain is Isopentenyl-diphosphate delta-isomerase (368 aa).

Residue 7–8 coordinates substrate; that stretch reads RK. FMN is bound by residues threonine 65, 66-68, serine 96, and asparagine 125; that span reads GMT. A substrate-binding site is contributed by 96–98; it reads SQR. Glutamine 160 lines the substrate pocket. A Mg(2+)-binding site is contributed by glutamate 161. FMN-binding positions include lysine 193, serine 218, threonine 223, 275–277, and 296–297; these read GIR and AL.

The protein belongs to the IPP isomerase type 2 family. In terms of assembly, homooctamer. Dimer of tetramers. FMN is required as a cofactor. Requires NADPH as cofactor. The cofactor is Mg(2+).

It localises to the cytoplasm. It carries out the reaction isopentenyl diphosphate = dimethylallyl diphosphate. In terms of biological role, involved in the biosynthesis of isoprenoids. Catalyzes the 1,3-allylic rearrangement of the homoallylic substrate isopentenyl (IPP) to its allylic isomer, dimethylallyl diphosphate (DMAPP). The polypeptide is Isopentenyl-diphosphate delta-isomerase (Saccharolobus islandicus (strain M.16.27) (Sulfolobus islandicus)).